We begin with the raw amino-acid sequence, 200 residues long: Probable molybdenum cofactor guanylyltransferase (200 aa).

GTP contacts are provided by residues L9–G11, K21, D69, and D100. D100 contributes to the Mg(2+) binding site.

This sequence belongs to the MobA family. Mg(2+) serves as cofactor.

The protein localises to the cytoplasm. It catalyses the reaction Mo-molybdopterin + GTP + H(+) = Mo-molybdopterin guanine dinucleotide + diphosphate. Functionally, transfers a GMP moiety from GTP to Mo-molybdopterin (Mo-MPT) cofactor (Moco or molybdenum cofactor) to form Mo-molybdopterin guanine dinucleotide (Mo-MGD) cofactor. This chain is Probable molybdenum cofactor guanylyltransferase, found in Bacillus anthracis (strain CDC 684 / NRRL 3495).